A 206-amino-acid polypeptide reads, in one-letter code: Probable N-acetyltransferase 14 (206 aa).

The N-acetyltransferase domain occupies 6 to 206 (LSVREMREDE…TLVREFSKDL (201 aa)). The helical transmembrane segment at 57–77 (FVLASFALALLLPVFLAVAAV) threads the bilayer.

The protein belongs to the camello family. Expressed in K-562 and HeLa cell lines and in brain.

Its subcellular location is the membrane. Its function is as follows. Probable acetyltransferase. Functionally, may act as a transcription factor that regulates the expression of coproporphyrinogen oxidase by binding to a promoter regulatory element. The protein is Probable N-acetyltransferase 14 (NAT14) of Homo sapiens (Human).